Reading from the N-terminus, the 836-residue chain is Exonuclease 1 (836 aa).

Residues 1–99 (MGIQGLLPQL…TKRERSRKEN (99 aa)) form an N-domain region. The Mg(2+) site is built by aspartate 30 and aspartate 78. The disordered stretch occupies residues 82 to 108 (LPMKGDQETKRERSRKENLERAKEHES). Residues 84 to 108 (MKGDQETKRERSRKENLERAKEHES) are compositionally biased toward basic and acidic residues. The interval 138 to 230 (KQEKVDYIVA…ILSGCDYLPS (93 aa)) is I-domain. Mg(2+)-binding residues include glutamate 150, aspartate 152, aspartate 171, aspartate 173, and aspartate 226. 3 disordered regions span residues 464–488 (RDDSASVSPQCSHDIGSDPAEDPDI), 568–641 (EDEC…TNSE), and 744–836 (TASA…TSRS). Positions 568–577 (EDECHDEDNC) are enriched in acidic residues. 2 stretches are compositionally biased toward polar residues: residues 578-592 (ETGNYTLPGDQQRSS) and 744-758 (TASAHSDQGKITSKA).

The protein belongs to the XPG/RAD2 endonuclease family. EXO1 subfamily. It depends on Mg(2+) as a cofactor.

The protein localises to the nucleus. Functionally, putative 5'-&gt;3' double-stranded DNA exonuclease which may also contain a cryptic 3'-&gt;5' double-stranded DNA exonuclease activity. May be involved in DNA mismatch repair (MMR). The chain is Exonuclease 1 (EXO1) from Oryza sativa subsp. japonica (Rice).